The chain runs to 378 residues: TelA-like protein SAV1406 (378 aa).

It belongs to the TelA family.

The chain is TelA-like protein SAV1406 from Staphylococcus aureus (strain Mu50 / ATCC 700699).